A 153-amino-acid chain; its full sequence is Large ribosomal subunit protein uL15 (153 aa).

The interval M1–G48 is disordered.

It belongs to the universal ribosomal protein uL15 family. As to quaternary structure, part of the 50S ribosomal subunit.

In terms of biological role, binds to the 23S rRNA. This is Large ribosomal subunit protein uL15 from Dehalococcoides mccartyi (strain ATCC BAA-2266 / KCTC 15142 / 195) (Dehalococcoides ethenogenes (strain 195)).